Consider the following 259-residue polypeptide: Ribosomal RNA small subunit methyltransferase J (259 aa).

S-adenosyl-L-methionine is bound by residues 101–102 (RD), 117–118 (ER), 153–154 (SS), and aspartate 176.

It belongs to the methyltransferase superfamily. RsmJ family.

The protein localises to the cytoplasm. The enzyme catalyses guanosine(1516) in 16S rRNA + S-adenosyl-L-methionine = N(2)-methylguanosine(1516) in 16S rRNA + S-adenosyl-L-homocysteine + H(+). Its function is as follows. Specifically methylates the guanosine in position 1516 of 16S rRNA. This chain is Ribosomal RNA small subunit methyltransferase J, found in Vibrio parahaemolyticus serotype O3:K6 (strain RIMD 2210633).